A 411-amino-acid polypeptide reads, in one-letter code: Phospholipase A1-II 6 (411 aa).

The active-site Acyl-ester intermediate is serine 226. Active-site charge relay system residues include serine 226, aspartate 296, and histidine 334.

Belongs to the AB hydrolase superfamily. Lipase family.

It is found in the cytoplasm. Its function is as follows. Acylhydrolase that catalyzes the hydrolysis of phospholipids at the sn-1 position. The protein is Phospholipase A1-II 6 of Oryza sativa subsp. japonica (Rice).